An 88-amino-acid chain; its full sequence is DNA-directed RNA polymerase subunit omega (88 aa).

Belongs to the RNA polymerase subunit omega family. In terms of assembly, the RNAP catalytic core consists of 2 alpha, 1 beta, 1 beta' and 1 omega subunit. When a sigma factor is associated with the core the holoenzyme is formed, which can initiate transcription.

It catalyses the reaction RNA(n) + a ribonucleoside 5'-triphosphate = RNA(n+1) + diphosphate. Promotes RNA polymerase assembly. Latches the N- and C-terminal regions of the beta' subunit thereby facilitating its interaction with the beta and alpha subunits. This Haemophilus influenzae (strain PittEE) protein is DNA-directed RNA polymerase subunit omega.